A 465-amino-acid polypeptide reads, in one-letter code: Cysteine--tRNA ligase (465 aa).

C27 contacts Zn(2+). Positions P29–N39 match the 'HIGH' region motif. Residues C207, H232, and E236 each coordinate Zn(2+). Residues K264 to S268 carry the 'KMSKS' region motif. K267 serves as a coordination point for ATP.

The protein belongs to the class-I aminoacyl-tRNA synthetase family. Monomer. Requires Zn(2+) as cofactor.

The protein localises to the cytoplasm. The catalysed reaction is tRNA(Cys) + L-cysteine + ATP = L-cysteinyl-tRNA(Cys) + AMP + diphosphate. This is Cysteine--tRNA ligase from Clostridioides difficile (strain 630) (Peptoclostridium difficile).